Reading from the N-terminus, the 297-residue chain is Cell division protein FtsX (297 aa).

At 1 to 21 (MRFGFLLNEVLTGFRRNVTMT) the chain is on the cytoplasmic side. The helical transmembrane segment at 22–42 (IAMILTTAISVGLFGGGMLVV) threads the bilayer. The Extracellular portion of the chain corresponds to 43-171 (RLADSSRAIY…LFAVLDGLSN (129 aa)). Residues 172–192 (AAFAVALVQAIGAILLIANMV) form a helical membrane-spanning segment. Residues 193 to 219 (QVAAYTRRTEIGIMRLVGASRWYTQLP) are Cytoplasmic-facing. A helical membrane pass occupies residues 220–240 (FLVEAMLAATMGVGIAVAGLM). At 241–267 (VVRALFLENALNQFYQANLIAKVDYAD) the chain is on the extracellular side. The helical transmembrane segment at 268 to 288 (ILFITPWLLLLGVAMSGLTAY) threads the bilayer. Topologically, residues 289 to 297 (LTLRLYVRR) are cytoplasmic.

Belongs to the ABC-4 integral membrane protein family. FtsX subfamily. Forms a membrane-associated complex with FtsE.

It is found in the cell membrane. Functionally, part of the ABC transporter FtsEX involved in cellular division. This is Cell division protein FtsX from Mycobacterium tuberculosis (strain ATCC 25177 / H37Ra).